Consider the following 361-residue polypeptide: Chorismate synthase (361 aa).

Residue R48 coordinates NADP(+). FMN contacts are provided by residues 126–128, G269, 302–306, and N328; these read RSS and KPVPS.

It belongs to the chorismate synthase family. As to quaternary structure, homotetramer. FMNH2 is required as a cofactor.

The enzyme catalyses 5-O-(1-carboxyvinyl)-3-phosphoshikimate = chorismate + phosphate. It functions in the pathway metabolic intermediate biosynthesis; chorismate biosynthesis; chorismate from D-erythrose 4-phosphate and phosphoenolpyruvate: step 7/7. In terms of biological role, catalyzes the anti-1,4-elimination of the C-3 phosphate and the C-6 proR hydrogen from 5-enolpyruvylshikimate-3-phosphate (EPSP) to yield chorismate, which is the branch point compound that serves as the starting substrate for the three terminal pathways of aromatic amino acid biosynthesis. This reaction introduces a second double bond into the aromatic ring system. In Treponema denticola (strain ATCC 35405 / DSM 14222 / CIP 103919 / JCM 8153 / KCTC 15104), this protein is Chorismate synthase.